A 247-amino-acid polypeptide reads, in one-letter code: Mycofactocin precursor peptide peptidase (247 aa).

Positions 38, 40, 49, 124, and 163 each coordinate a divalent metal cation.

Belongs to the creatininase superfamily. Homooctamer. Fe(2+) serves as cofactor. Requires Zn(2+) as cofactor.

The enzyme catalyses [mycofactocin precursor peptide]-C-terminal glycyl-N-{5-[(4-hydroxyphenyl)methyl]-4,4-dimethyl-2-oxopyrrolidin-3-yl}acetamide + H2O = [mycofactocin precursor peptide]-C-terminal glycine + 3-amino-5-[(4-hydroxyphenyl)methyl]-4,4-dimethyl-2-pyrrolidin-2-one. Functionally, peptidase involved in the biosynthesis of the enzyme cofactor mycofactocin (MFT). Catalyzes cleavage of the MftC-modified MftA peptide to liberate its final two residues, which consist of a cross-linked valine-decarboxylated tyrosine dipeptide (named 3-amino-5-[(4-hydroxyphenyl)methyl]-4,4-dimethyl-2-pyrrolidin-2-one or ADHP). Is required for the in vivo ethanol assimilation in M.smegmatis. The polypeptide is Mycofactocin precursor peptide peptidase (Mycolicibacterium smegmatis (strain ATCC 700084 / mc(2)155) (Mycobacterium smegmatis)).